Here is a 487-residue protein sequence, read N- to C-terminus: MTYFDQDLTSLHADLVAKKISATELAKATFANMNQVDPKLGAFLNLNEEQALQQAAALDQDGIDANNVFAGIPMAVKDNIVTKGLTTTAASKMLENFVPVYNATVVDKLLASNALIVGKTNMDEFAMGGSTETSAFHVTRNPWDISRVPGGSSGGSAVAVASGQVPVALGSDTGGSIRQPSSFNGIVGMKPTYGRVSRWGLIAFGSSLDQIGPMTRTVKDNAAALNMIAGNDVHDTTSSKQTVPDFTAGLTGDIKGMKIGLPKEYMGDGIDPKVREVIQQAVKQFEDLGATVEEVSLPNSRYGVAAYYIIASSEASSNLQRFDGIRYGFRADDVKNLEDVYVRSRSEGFGDEVKRRIMLGTFSLSAGYYDAYFHKAGQVRTMIINDFNKVFEDYDLIMGPVAPTPAFKLGDELSDPITMYMNDVLTIPVNLAGLPGMSVPAGFADGLPVGLQLIGKAFDESTMYRAGYAFEQATQVYKQTPKVGGAN.

Catalysis depends on charge relay system residues Lys77 and Ser152. The active-site Acyl-ester intermediate is the Ser176.

The protein belongs to the amidase family. GatA subfamily. As to quaternary structure, heterotrimer of A, B and C subunits.

The catalysed reaction is L-glutamyl-tRNA(Gln) + L-glutamine + ATP + H2O = L-glutaminyl-tRNA(Gln) + L-glutamate + ADP + phosphate + H(+). In terms of biological role, allows the formation of correctly charged Gln-tRNA(Gln) through the transamidation of misacylated Glu-tRNA(Gln) in organisms which lack glutaminyl-tRNA synthetase. The reaction takes place in the presence of glutamine and ATP through an activated gamma-phospho-Glu-tRNA(Gln). The chain is Glutamyl-tRNA(Gln) amidotransferase subunit A from Lactiplantibacillus plantarum (strain ATCC BAA-793 / NCIMB 8826 / WCFS1) (Lactobacillus plantarum).